Reading from the N-terminus, the 91-residue chain is Small ribosomal subunit protein uS15 (91 aa).

Belongs to the universal ribosomal protein uS15 family. As to quaternary structure, part of the 30S ribosomal subunit. Forms a bridge to the 50S subunit in the 70S ribosome, contacting the 23S rRNA.

Functionally, one of the primary rRNA binding proteins, it binds directly to 16S rRNA where it helps nucleate assembly of the platform of the 30S subunit by binding and bridging several RNA helices of the 16S rRNA. In terms of biological role, forms an intersubunit bridge (bridge B4) with the 23S rRNA of the 50S subunit in the ribosome. The sequence is that of Small ribosomal subunit protein uS15 from Rickettsia africae (strain ESF-5).